Consider the following 500-residue polypeptide: NAD(P)H-quinone oxidoreductase chain 4, chloroplastic (500 aa).

Helical transmembrane passes span 4 to 24, 37 to 57, 84 to 104, 111 to 129, 134 to 154, 167 to 187, 208 to 228, 242 to 262, 272 to 292, 305 to 325, 330 to 350, 386 to 406, 416 to 436, and 462 to 482; these read FPWLTIIIVLPIFAGFLILFL, LCICIIELLLTTYAFGYHFQL, GISIGPILLTGFITTLATLAA, SRVFHFLMLAMYSGQIGPF, LLLFFIMWELELIPVYLLLSM, FILYTAGSSAFLLVGILGICL, ALEMLFYIGFFIAFAVKSPII, HYSTCMLLAGILLKMGAYGLV, AHSIFSPWLMIVGTIQIIYAA, IAYSSVSHMGFIIIGLGSIND, GAILQIISHGFIGAALFFLAG, LALPGMSGFVAELILFFGILT, ILITFVMAIGMILTPIYSLSM, and FFVSISILLPVIAIGIYPDFV.

Belongs to the complex I subunit 4 family.

The protein resides in the plastid. Its subcellular location is the chloroplast thylakoid membrane. It catalyses the reaction a plastoquinone + NADH + (n+1) H(+)(in) = a plastoquinol + NAD(+) + n H(+)(out). The catalysed reaction is a plastoquinone + NADPH + (n+1) H(+)(in) = a plastoquinol + NADP(+) + n H(+)(out). In Morus indica (Mulberry), this protein is NAD(P)H-quinone oxidoreductase chain 4, chloroplastic.